Here is a 394-residue protein sequence, read N- to C-terminus: Elongation factor Tu (394 aa).

Positions 10 to 204 (KPHVNIGTIG…AVDSYIPQPV (195 aa)) constitute a tr-type G domain. A G1 region spans residues 19-26 (GHVDHGKT). Residue 19–26 (GHVDHGKT) coordinates GTP. Residue Thr26 participates in Mg(2+) binding. Residues 60–64 (GITIS) are G2. The G3 stretch occupies residues 81–84 (DCPG). GTP-binding positions include 81–85 (DCPGH) and 136–139 (NKID). A G4 region spans residues 136-139 (NKID). The interval 174-176 (SAL) is G5.

It belongs to the TRAFAC class translation factor GTPase superfamily. Classic translation factor GTPase family. EF-Tu/EF-1A subfamily. As to quaternary structure, monomer.

The protein resides in the cytoplasm. It catalyses the reaction GTP + H2O = GDP + phosphate + H(+). GTP hydrolase that promotes the GTP-dependent binding of aminoacyl-tRNA to the A-site of ribosomes during protein biosynthesis. The chain is Elongation factor Tu from Rickettsia peacockii (strain Rustic).